The following is a 500-amino-acid chain: NF-kappa-B inhibitor epsilon (500 aa).

A compositionally biased stretch (basic and acidic residues) spans 1–10 (MNQRRSESRP). Disordered regions lie at residues 1-66 (MNQR…PAWA), 84-215 (LSSL…YGSS), and 222-241 (SLLG…LPHV). 3 positions are modified to phosphoserine: S157, S161, and S183. The segment covering 161-186 (SLRSLRSLPESTSAPASGPSDGSPQP) has biased composition (low complexity). Basic and acidic residues predominate over residues 196–209 (EPQEKEDADGERAD). 6 ANK repeats span residues 258–291 (DGDT…DIQN), 293–322 (LYQT…SRAL), 326–355 (HGDT…EPGR), 369–398 (QGLA…DIDV), 403–432 (SGKT…QVDA), and 436–465 (NGCT…DSLL).

The protein belongs to the NF-kappa-B inhibitor family. Interacts with RELA, REL, NFKB1 nuclear factor NF-kappa-B p50 subunit and NFKB2 nuclear factor NF-kappa-B p52 subunit. Interacts with HNRNPA2B1; the interaction may be mediated by the RRM2 domain of HNRNPA2B1, and HNRNPA2B1 may interact simultaneously with FAM76B and either NFKBIA or NFKBIE to form a complex. In terms of processing, serine phosphorylated; followed by proteasome-dependent degradation. In terms of tissue distribution, highly expressed in spleen, testis and lung, followed by kidney, pancreas, heart, placenta and brain. Also expressed in granulocytes and macrophages.

Its subcellular location is the cytoplasm. Its function is as follows. Sequesters NF-kappa-B transcription factor complexes in the cytoplasm, thereby inhibiting their activity. Sequestered complexes include NFKB1-RELA (p50-p65) and NFKB1-REL (p50-c-Rel) complexes. Limits B-cell activation in response to pathogens, and also plays an important role in B-cell development. This chain is NF-kappa-B inhibitor epsilon (NFKBIE), found in Homo sapiens (Human).